Consider the following 422-residue polypeptide: Biofilm regulator 1 (422 aa).

Composition is skewed to low complexity over residues 1–19 (MSSSSSLSSSTTTATTTSA) and 36–45 (SGGSNNGNGS). Disordered regions lie at residues 1 to 86 (MSSS…KCPP) and 116 to 207 (RLSS…PSHP). Residues 46–61 (ALKSQISPRLSDTSRI) are compositionally biased toward polar residues. Composition is skewed to low complexity over residues 69–81 (TSGSSTPTSSSTP) and 120–143 (PTLPVKVQPQQQPQLPPASSLSPV). Polar residues predominate over residues 146–159 (VINTPPQQPQSVSA). A compositionally biased stretch (low complexity) spans 160–194 (STSPNTQYQYYQYQQQSSPIQQQQQQQQATPAATP). The segment covering 195–205 (TVMQMAQNQPS) has biased composition (polar residues). The segment at 282–307 (CHRCGTTETPEWRRGPKGVRTLCNAC) adopts a GATA-type zinc-finger fold.

As to quaternary structure, interacts with HDA1.

It is found in the nucleus. In terms of biological role, transcription factor required for hyphal growth, biofilm formation, and virulence. Promotes formation of both conventional and pheromone-stimulated biofilms. Binds and recruits HDA1 to promoters of hypha-specific genes in a rapamycin-dependent manner. Involved in the switch between two heritable states, the white and opaque states. These two cell types differ in many characteristics, including cell structure, mating competence, and virulence. Each state is heritable for many generations, and switching between states occurs stochastically at low frequency. The polypeptide is Biofilm regulator 1 (BRG1) (Candida albicans (strain SC5314 / ATCC MYA-2876) (Yeast)).